We begin with the raw amino-acid sequence, 307 residues long: Ubiquinol oxidase subunit 2 (307 aa).

A signal peptide spans methionine 1–glycine 23. A lipid anchor (N-palmitoyl cysteine) is attached at cysteine 24. Cysteine 24 carries the S-diacylglycerol cysteine lipid modification. 2 helical membrane-spanning segments follow: residues serine 46 to tryptophan 66 and isoleucine 87 to tyrosine 107.

This sequence belongs to the cytochrome c oxidase subunit 2 family. As to quaternary structure, heterotetramer of the subunits 1, 2, 3 and 4.

The protein resides in the cell membrane. The sequence is that of Ubiquinol oxidase subunit 2 (cyaB) from Acetobacter aceti.